Reading from the N-terminus, the 185-residue chain is MIDETLFDAEEKMEKAVSVARDDLASIRTGRANPGMFNRIHIDYYGASTPITQLSSINVPEARMVVIKPYEANQLRPIEDAIRNSDLGVNPTNDGNIIRVSIPQLTEERRRDLVKQAKSKGEDAKVSIRNIRRKAMEELARIKKDGDAGEDDVTRAEKDLDKSTHQYTSQVDDLVKHKEGELLEV.

Over residues 142-164 (IKKDGDAGEDDVTRAEKDLDKST) the composition is skewed to basic and acidic residues. A disordered region spans residues 142–173 (IKKDGDAGEDDVTRAEKDLDKSTHQYTSQVDD).

The protein belongs to the RRF family.

Its subcellular location is the cytoplasm. Its function is as follows. Responsible for the release of ribosomes from messenger RNA at the termination of protein biosynthesis. May increase the efficiency of translation by recycling ribosomes from one round of translation to another. This chain is Ribosome-recycling factor, found in Mycolicibacterium gilvum (strain PYR-GCK) (Mycobacterium gilvum (strain PYR-GCK)).